The primary structure comprises 259 residues: Histidinol-phosphatase (259 aa).

The Mg(2+) site is built by E66, D82, I84, D85, and D207. E66 contributes to the substrate binding site. Substrate contacts are provided by residues 84–87 and D207; that span reads IDGT.

This sequence belongs to the inositol monophosphatase superfamily. The cofactor is Mg(2+).

The catalysed reaction is L-histidinol phosphate + H2O = L-histidinol + phosphate. It participates in amino-acid biosynthesis; L-histidine biosynthesis; L-histidine from 5-phospho-alpha-D-ribose 1-diphosphate: step 8/9. Catalyzes the dephosphorylation of histidinol-phosphate to histidinol, the direct precursor of histidine. The polypeptide is Histidinol-phosphatase (hisN) (Chlorobaculum parvum (strain DSM 263 / NCIMB 8327) (Chlorobium vibrioforme subsp. thiosulfatophilum)).